A 204-amino-acid polypeptide reads, in one-letter code: Large ribosomal subunit protein uL4 (204 aa).

The disordered stretch occupies residues 49 to 75; that stretch reads TKGRSEVSGGGKKPWRQKGRGGARAGS.

The protein belongs to the universal ribosomal protein uL4 family. Part of the 50S ribosomal subunit.

In terms of biological role, one of the primary rRNA binding proteins, this protein initially binds near the 5'-end of the 23S rRNA. It is important during the early stages of 50S assembly. It makes multiple contacts with different domains of the 23S rRNA in the assembled 50S subunit and ribosome. Functionally, forms part of the polypeptide exit tunnel. The sequence is that of Large ribosomal subunit protein uL4 from Campylobacter hominis (strain ATCC BAA-381 / DSM 21671 / CCUG 45161 / LMG 19568 / NCTC 13146 / CH001A).